Consider the following 519-residue polypeptide: Maturase K (519 aa).

Belongs to the intron maturase 2 family. MatK subfamily.

The protein resides in the plastid. It is found in the chloroplast. Functionally, usually encoded in the trnK tRNA gene intron. Probably assists in splicing its own and other chloroplast group II introns. The polypeptide is Maturase K (Aesculus pavia (Red buckeye)).